The chain runs to 415 residues: Gamma-glutamyl phosphate reductase (415 aa).

It belongs to the gamma-glutamyl phosphate reductase family.

The protein localises to the cytoplasm. The catalysed reaction is L-glutamate 5-semialdehyde + phosphate + NADP(+) = L-glutamyl 5-phosphate + NADPH + H(+). It functions in the pathway amino-acid biosynthesis; L-proline biosynthesis; L-glutamate 5-semialdehyde from L-glutamate: step 2/2. Catalyzes the NADPH-dependent reduction of L-glutamate 5-phosphate into L-glutamate 5-semialdehyde and phosphate. The product spontaneously undergoes cyclization to form 1-pyrroline-5-carboxylate. The protein is Gamma-glutamyl phosphate reductase of Pseudoalteromonas translucida (strain TAC 125).